The sequence spans 138 residues: MIATGAYLWTLREAIGLCRNDVAHEAGTNNVQIMRIEKGEIDTRGSLLLSVVRAVNFNAEHIAQLFLMLVATEEDGRNLAISWINRETTSAIDEFIADVKKDNKVSEALKLIQQLEALDPSSLDRLLGYGQSLLDRNR.

The segment at residues 17–38 (LCRNDVAHEAGTNNVQIMRIEK) is a DNA-binding region (H-T-H motif).

This is an uncharacterized protein from Herpetosiphon aurantiacus (Herpetosiphon giganteus).